The sequence spans 231 residues: Histidine biosynthesis bifunctional protein HisIE (231 aa).

A phosphoribosyl-AMP cyclohydrolase region spans residues 1-130 (MQDVFRQIDW…QKYPIGVYHI (130 aa)). The phosphoribosyl-ATP pyrophosphohydrolase stretch occupies residues 131–231 (LDDLYHIIEQ…GIEEKASRKH (101 aa)).

In the N-terminal section; belongs to the PRA-CH family. It in the C-terminal section; belongs to the PRA-PH family.

It localises to the cytoplasm. It carries out the reaction 1-(5-phospho-beta-D-ribosyl)-ATP + H2O = 1-(5-phospho-beta-D-ribosyl)-5'-AMP + diphosphate + H(+). The enzyme catalyses 1-(5-phospho-beta-D-ribosyl)-5'-AMP + H2O = 1-(5-phospho-beta-D-ribosyl)-5-[(5-phospho-beta-D-ribosylamino)methylideneamino]imidazole-4-carboxamide. It functions in the pathway amino-acid biosynthesis; L-histidine biosynthesis; L-histidine from 5-phospho-alpha-D-ribose 1-diphosphate: step 2/9. It participates in amino-acid biosynthesis; L-histidine biosynthesis; L-histidine from 5-phospho-alpha-D-ribose 1-diphosphate: step 3/9. The protein is Histidine biosynthesis bifunctional protein HisIE of Helicobacter hepaticus (strain ATCC 51449 / 3B1).